Consider the following 148-residue polypeptide: Deoxyuridine 5'-triphosphate nucleotidohydrolase (148 aa).

Substrate-binding positions include 65-67, N78, 82-84, and K92; these read RSG and TID.

Belongs to the dUTPase family. It depends on Mg(2+) as a cofactor.

It carries out the reaction dUTP + H2O = dUMP + diphosphate + H(+). The protein operates within pyrimidine metabolism; dUMP biosynthesis; dUMP from dCTP (dUTP route): step 2/2. Functionally, this enzyme is involved in nucleotide metabolism: it produces dUMP, the immediate precursor of thymidine nucleotides and it decreases the intracellular concentration of dUTP so that uracil cannot be incorporated into DNA. This chain is Deoxyuridine 5'-triphosphate nucleotidohydrolase, found in Chlorobium luteolum (strain DSM 273 / BCRC 81028 / 2530) (Pelodictyon luteolum).